The primary structure comprises 397 residues: GDP-mannose transporter 1 (397 aa).

The interval 1 to 57 (MSKPFVPTPNISRPATPSSLDYGKDEASSTLLRDMGERGDRERKDREERDKKEAMPS) is disordered. At 1–61 (MSKPFVPTPN…KEAMPSGQDQ (61 aa)) the chain is on the cytoplasmic side. Positions 9–19 (PNISRPATPSS) are enriched in polar residues. The span at 34 to 54 (DMGERGDRERKDREERDKKEA) shows a compositional bias: basic and acidic residues. Residues 62-82 (VLPILSYCAASIMMTVVNKYV) traverse the membrane as a helical segment. Topologically, residues 83–87 (VSGAN) are lumenal. N-linked (GlcNAc...) asparagine glycosylation occurs at Asn-87. The chain crosses the membrane as a helical span at residues 88-108 (FTMTFLLLAIQSSVCVLAVTT). Residues 109 to 124 (VKKLGFISFRDFDKND) lie on the Cytoplasmic side of the membrane. Residues 125-142 (AKAWWPISTLLVAVIYTG) traverse the membrane as a helical segment. At 143 to 145 (SKA) the chain is on the lumenal side. A helical transmembrane segment spans residues 146 to 168 (LQFLSIPVYTIFKNLTIILIAYG). Residues 169 to 174 (EVFMFN) are Cytoplasmic-facing. Residues 175–197 (GAVSGLTLCSFALMVGSSIIAAW) traverse the membrane as a helical segment. At 198–228 (SDITSVWNKEPELDPITGLEITVGPVSTIGG) the chain is on the lumenal side. Residues 229 to 249 (LNAGYIWMALNCFVSAAYVLF) form a helical membrane-spanning segment. At 250–272 (MRKRIKVTGFKDWDSMYYNNLLS) the chain is on the cytoplasmic side. A helical transmembrane segment spans residues 273–293 (IPILVVFSLVIEDWGSESLAL). At 294–300 (NFPASNR) the chain is on the lumenal side. Residues 301 to 321 (VLLLSAMAFSGAAAVFISYST) traverse the membrane as a helical segment. The Cytoplasmic portion of the chain corresponds to 322-332 (AWCVRITGSTT). Residues 333–353 (YSMVGALNKLPVAASGILFFG) form a helical membrane-spanning segment. The Lumenal portion of the chain corresponds to 354 to 355 (DP). A helical membrane pass occupies residues 356–376 (ANFGNISAIAVGGVAGVVYAV). The Cytoplasmic portion of the chain corresponds to 377–397 (AKTNQAKVEKARQARAAGGRP).

The protein belongs to the TPT transporter family. SLC35D subfamily. Homooligomer.

The protein resides in the golgi apparatus membrane. The protein localises to the cytoplasmic vesicle membrane. It localises to the endoplasmic reticulum membrane. Functionally, involved in the import of GDP-mannose from the cytoplasm into the Golgi lumen. Involved in capsule synthesis. The sequence is that of GDP-mannose transporter 1 (GMT1) from Cryptococcus neoformans var. neoformans serotype D (strain B-3501A) (Filobasidiella neoformans).